Here is a 176-residue protein sequence, read N- to C-terminus: Nucleoside triphosphate/diphosphate phosphatase (176 aa).

Arg-23 (proton donor) is an active-site residue. Positions 87, 103, 105, 107, 120, and 123 each coordinate Mg(2+).

Belongs to the Ntdp family. Requires Mg(2+) as cofactor.

The catalysed reaction is a ribonucleoside 5'-triphosphate + H2O = a ribonucleoside 5'-diphosphate + phosphate + H(+). It catalyses the reaction a ribonucleoside 5'-diphosphate + H2O = a ribonucleoside 5'-phosphate + phosphate + H(+). Has nucleoside phosphatase activity towards nucleoside triphosphates and nucleoside diphosphates. The polypeptide is Nucleoside triphosphate/diphosphate phosphatase (Lactococcus lactis subsp. cremoris (strain MG1363)).